We begin with the raw amino-acid sequence, 627 residues long: UvrABC system protein C (627 aa).

Residues Pro-26 to Val-105 enclose the GIY-YIG domain. In terms of domain architecture, UVR spans Ser-219–Tyr-254.

This sequence belongs to the UvrC family. In terms of assembly, interacts with UvrB in an incision complex.

It localises to the cytoplasm. In terms of biological role, the UvrABC repair system catalyzes the recognition and processing of DNA lesions. UvrC both incises the 5' and 3' sides of the lesion. The N-terminal half is responsible for the 3' incision and the C-terminal half is responsible for the 5' incision. This chain is UvrABC system protein C, found in Pelodictyon phaeoclathratiforme (strain DSM 5477 / BU-1).